The chain runs to 456 residues: MNDTIAAVSTSSGAGAIGIIRMSGPEALTISSSFLFSKNKFLSPSEILPRTAIQCVFQIGDRKIDQILFFYFKSPNSYTGEDLCEFHFHGNPILLREALDAIFRAGARPAKQGEFSRRAFLNEKLDLTEVEAIGRLISARSRFELELAQKNVFGEVTRFTSNLRSQLISLKAECEAEIDFSTEDLTYESLEERKTRIENVKSLCQTLISKSSSAEKLIQQFRIVLYGEPNTGKSSLMNVLLGKERSIISEIPGTTRDYISEEIFLEGIPVRLVDTAGVRETTDHIEKLGIERSEKEFQSADVRLFLVDVSKKENWKEFINKSRERLEGSILIANKIDILNSSWDRNLFSDVKDLIVLEISCKTKEGISNLLDAIKERTGKLGHSEDYVLLEERQRYHFETIVRCLDKTLHLLKEGAPAEIYIQEINYALAEIGEVNGKVDTEEVLGRIFSKFCVGK.

(6S)-5-formyl-5,6,7,8-tetrahydrofolate is bound by residues Arg-21, Glu-85, and Lys-124. A TrmE-type G domain is found at 220-379 (QFRIVLYGEP…LLDAIKERTG (160 aa)). Asn-230 is a K(+) binding site. GTP-binding positions include 230–235 (NTGKSS), 249–255 (SEIPGTT), and 274–277 (DTAG). Ser-234 contributes to the Mg(2+) binding site. Residues Ser-249, Ile-251, and Thr-254 each contribute to the K(+) site. Residue Thr-255 participates in Mg(2+) binding. (6S)-5-formyl-5,6,7,8-tetrahydrofolate is bound at residue Lys-456.

The protein belongs to the TRAFAC class TrmE-Era-EngA-EngB-Septin-like GTPase superfamily. TrmE GTPase family. In terms of assembly, homodimer. Heterotetramer of two MnmE and two MnmG subunits. Requires K(+) as cofactor.

It is found in the cytoplasm. Exhibits a very high intrinsic GTPase hydrolysis rate. Involved in the addition of a carboxymethylaminomethyl (cmnm) group at the wobble position (U34) of certain tRNAs, forming tRNA-cmnm(5)s(2)U34. The protein is tRNA modification GTPase MnmE of Leptospira interrogans serogroup Icterohaemorrhagiae serovar copenhageni (strain Fiocruz L1-130).